Here is a 234-residue protein sequence, read N- to C-terminus: tRNA1(Val) (adenine(37)-N6)-methyltransferase (234 aa).

The protein belongs to the methyltransferase superfamily. tRNA (adenine-N(6)-)-methyltransferase family.

The protein resides in the cytoplasm. It carries out the reaction adenosine(37) in tRNA1(Val) + S-adenosyl-L-methionine = N(6)-methyladenosine(37) in tRNA1(Val) + S-adenosyl-L-homocysteine + H(+). Functionally, specifically methylates the adenine in position 37 of tRNA(1)(Val) (anticodon cmo5UAC). The sequence is that of tRNA1(Val) (adenine(37)-N6)-methyltransferase from Phocaeicola vulgatus (strain ATCC 8482 / DSM 1447 / JCM 5826 / CCUG 4940 / NBRC 14291 / NCTC 11154) (Bacteroides vulgatus).